A 427-amino-acid polypeptide reads, in one-letter code: MSVKWEKQEGNVGKLTFEIEQEKVKEGLDRAFVKVRKTLNVPGFRKGKVPRQIFNQRFGEEALFQDALDILLPEVYSAAIDEAGIDPVDTPQVNIESMEKGETWVLTAEVTVKPEVKLGDYKGLEVEKRETELTTEELEAELKQLQERQAELVVKEDAPAENGDTVILDFEGFKDGVAFEGGQAENHSLELGSGQFIPGFEEKLVGLKAGDEADIELTFPEEYHAEDLAGQPVVFKVKLHEIKTKEVPALDDELAKDIDEEVETLDELKEKISKRLQEAKEESVAQAKQEEVIAKAVENAEVDIPHAMVHHEADHLMNHFAQDLQAQGLTPELYYQFTGQTEEAMHAQMEKDAEKRVKMNLVLEAIAEAENIEPTEEAIDEEISTLAEKYGMEKDAVRAALGDMSELKSDLKIRKAIDVLLDSAVEK.

Positions 163–248 (GDTVILDFEG…LHEIKTKEVP (86 aa)) constitute a PPIase FKBP-type domain.

Belongs to the FKBP-type PPIase family. Tig subfamily.

It is found in the cytoplasm. The catalysed reaction is [protein]-peptidylproline (omega=180) = [protein]-peptidylproline (omega=0). Functionally, involved in protein export. Acts as a chaperone by maintaining the newly synthesized protein in an open conformation. Functions as a peptidyl-prolyl cis-trans isomerase. This Listeria monocytogenes serotype 4b (strain CLIP80459) protein is Trigger factor.